The following is a 1143-amino-acid chain: cGMP-specific 3',5'-cyclic phosphodiesterase (1143 aa).

2 stretches are compositionally biased toward low complexity: residues methionine 1–serine 19 and threonine 31–serine 45. The tract at residues methionine 1–aspartate 167 is disordered. Residues lysine 46 to threonine 59 are compositionally biased toward polar residues. Residues glycine 75–glycine 84 show a composition bias toward low complexity. A compositionally biased stretch (polar residues) spans serine 96–serine 107. The span at serine 131–glutamine 153 shows a compositional bias: low complexity. 2 consecutive GAF domains span residues aspartate 272–isoleucine 424 and asparagine 456–isoleucine 637. The region spanning serine 667–valine 990 is the PDEase domain. The active-site Proton donor is histidine 743. A divalent metal cation is bound by residues histidine 747, histidine 783, aspartate 784, and aspartate 894. Disordered regions lie at residues glutamine 1031–leucine 1060 and serine 1090–leucine 1143. Composition is skewed to basic and acidic residues over residues glycine 1036 to arginine 1047 and serine 1090 to serine 1100. The segment covering alanine 1109–glycine 1127 has biased composition (low complexity). Over residues serine 1133 to leucine 1143 the composition is skewed to basic residues. Residue cysteine 1140 is modified to Cysteine methyl ester. A lipid anchor (S-farnesyl cysteine) is attached at cysteine 1140. Residues alanine 1141–leucine 1143 constitute a propeptide, removed in mature form.

It belongs to the cyclic nucleotide phosphodiesterase family. Interacts with PrBP. A divalent metal cation serves as cofactor.

It is found in the cell membrane. It catalyses the reaction 3',5'-cyclic GMP + H2O = GMP + H(+). Functionally, has a role regulating cGMP transport in Malpighian tubule principal cells. The sequence is that of cGMP-specific 3',5'-cyclic phosphodiesterase from Drosophila simulans (Fruit fly).